A 641-amino-acid chain; its full sequence is Calpain-6 (641 aa).

The Calpain catalytic domain occupies 26–343 (LFCDPTFLPE…FHKLNVCRNV (318 aa)). Residues 344–495 (NNPVFGRKEL…IFSEVPVQLR (152 aa)) are domain III. A C2 domain is found at 498 to 621 (TLDMPKMSCW…YLRKKGGPTA (124 aa)).

This sequence belongs to the peptidase C2 family. As to quaternary structure, interacts (via domain III) with microtubules. Interacts (via domain II) with ARHGEF2 (via the N-terminal zinc finger).

It localises to the cytoplasm. It is found in the perinuclear region. The protein resides in the cytoskeleton. Its subcellular location is the spindle. In terms of biological role, microtubule-stabilizing protein that may be involved in the regulation of microtubule dynamics and cytoskeletal organization. May act as a regulator of RAC1 activity through interaction with ARHGEF2 to control lamellipodial formation and cell mobility. Does not seem to have protease activity as it has lost the active site residues. The polypeptide is Calpain-6 (Capn6) (Rattus norvegicus (Rat)).